A 175-amino-acid chain; its full sequence is Peptide deformylase (175 aa).

Fe cation-binding residues include cysteine 98 and histidine 140. Glutamate 141 is an active-site residue. A Fe cation-binding site is contributed by histidine 144.

Belongs to the polypeptide deformylase family. Fe(2+) is required as a cofactor.

The enzyme catalyses N-terminal N-formyl-L-methionyl-[peptide] + H2O = N-terminal L-methionyl-[peptide] + formate. Functionally, removes the formyl group from the N-terminal Met of newly synthesized proteins. Requires at least a dipeptide for an efficient rate of reaction. N-terminal L-methionine is a prerequisite for activity but the enzyme has broad specificity at other positions. This is Peptide deformylase from Nitrobacter hamburgensis (strain DSM 10229 / NCIMB 13809 / X14).